We begin with the raw amino-acid sequence, 122 residues long: Large ribosomal subunit protein uL14 (122 aa).

It belongs to the universal ribosomal protein uL14 family. In terms of assembly, part of the 50S ribosomal subunit. Forms a cluster with proteins L3 and L19. In the 70S ribosome, L14 and L19 interact and together make contacts with the 16S rRNA in bridges B5 and B8.

Functionally, binds to 23S rRNA. Forms part of two intersubunit bridges in the 70S ribosome. The polypeptide is Large ribosomal subunit protein uL14 (Streptococcus gordonii (strain Challis / ATCC 35105 / BCRC 15272 / CH1 / DL1 / V288)).